Consider the following 345-residue polypeptide: Dimethyladenosine transferase 1, mitochondrial (345 aa).

Residues Met1–Leu27 constitute a mitochondrion transit peptide. S-adenosyl-L-methionine-binding positions include Gln35 to Leu38, Asn36, Leu38, Gly63, Glu85, Asp111, and Asn141.

It belongs to the class I-like SAM-binding methyltransferase superfamily. rRNA adenine N(6)-methyltransferase family. KsgA subfamily. In terms of assembly, interacts with mitochondrial RNA polymerase POLRMT. Interacts with TFAM.

Its subcellular location is the mitochondrion. In terms of biological role, S-adenosyl-L-methionine-dependent methyltransferase which specifically dimethylates mitochondrial 12S rRNA at the conserved stem loop. Also required for basal transcription of mitochondrial DNA, probably via its interaction with POLRMT and TFAM. Stimulates transcription independently of the methyltransferase activity. This chain is Dimethyladenosine transferase 1, mitochondrial (Tfb1m), found in Rattus norvegicus (Rat).